Here is a 393-residue protein sequence, read N- to C-terminus: Pectate lyase A (393 aa).

An N-terminal signal peptide occupies residues 1–32 (MMNKASGRSFTRSSKYLLATLIAGMMASGVSA). Ca(2+)-binding residues include Glu-174, Asp-176, Asp-216, and Asp-220. Arg-273 is an active-site residue. A disulfide bridge connects residues Cys-330 and Cys-358.

It belongs to the polysaccharide lyase 1 family. PLADES subfamily. The cofactor is Ca(2+).

Its subcellular location is the secreted. It catalyses the reaction Eliminative cleavage of (1-&gt;4)-alpha-D-galacturonan to give oligosaccharides with 4-deoxy-alpha-D-galact-4-enuronosyl groups at their non-reducing ends.. The protein operates within glycan metabolism; pectin degradation; 2-dehydro-3-deoxy-D-gluconate from pectin: step 2/5. Involved in maceration and soft-rotting of plant tissue. The chain is Pectate lyase A (pelA) from Dickeya chrysanthemi (Pectobacterium chrysanthemi).